Here is a 314-residue protein sequence, read N- to C-terminus: Thymidylate synthase (314 aa).

DUMP is bound by residues arginine 21 and 176–177; that span reads RR. Cysteine 196 (nucleophile) is an active-site residue. DUMP is bound by residues 216 to 219, asparagine 227, and 257 to 259; these read RSAD and HLY. Aspartate 219 serves as a coordination point for (6R)-5,10-methylene-5,6,7,8-tetrahydrofolate. Serine 313 lines the (6R)-5,10-methylene-5,6,7,8-tetrahydrofolate pocket.

It belongs to the thymidylate synthase family. Bacterial-type ThyA subfamily. As to quaternary structure, homodimer.

It localises to the cytoplasm. It catalyses the reaction dUMP + (6R)-5,10-methylene-5,6,7,8-tetrahydrofolate = 7,8-dihydrofolate + dTMP. Its pathway is pyrimidine metabolism; dTTP biosynthesis. Functionally, catalyzes the reductive methylation of 2'-deoxyuridine-5'-monophosphate (dUMP) to 2'-deoxythymidine-5'-monophosphate (dTMP) while utilizing 5,10-methylenetetrahydrofolate (mTHF) as the methyl donor and reductant in the reaction, yielding dihydrofolate (DHF) as a by-product. This enzymatic reaction provides an intracellular de novo source of dTMP, an essential precursor for DNA biosynthesis. The protein is Thymidylate synthase of Listeria monocytogenes serotype 4b (strain F2365).